The primary structure comprises 364 residues: Paraneoplastic antigen Ma2 homolog (364 aa).

At Ala2 the chain carries N-acetylalanine. Residues 335–351 (EEEEATFENENTEEPEG) show a composition bias toward acidic residues. A disordered region spans residues 335 to 364 (EEEEATFENENTEEPEGGDGYGHWGNEAND).

This sequence belongs to the PNMA family.

It localises to the nucleus. Its subcellular location is the nucleolus. The sequence is that of Paraneoplastic antigen Ma2 homolog (PNMA2) from Bos taurus (Bovine).